We begin with the raw amino-acid sequence, 374 residues long: N5-carboxyaminoimidazole ribonucleotide synthase (374 aa).

ATP-binding positions include arginine 108, lysine 148, 153 to 159 (GYDGKGQ), 183 to 186 (EKYL), glutamate 191, histidine 214, and 266 to 267 (NE). In terms of domain architecture, ATP-grasp spans 112–296 (KETLKSAGTK…QFDTHILAVT (185 aa)).

It belongs to the PurK/PurT family. In terms of assembly, homodimer.

The enzyme catalyses 5-amino-1-(5-phospho-beta-D-ribosyl)imidazole + hydrogencarbonate + ATP = 5-carboxyamino-1-(5-phospho-D-ribosyl)imidazole + ADP + phosphate + 2 H(+). It functions in the pathway purine metabolism; IMP biosynthesis via de novo pathway; 5-amino-1-(5-phospho-D-ribosyl)imidazole-4-carboxylate from 5-amino-1-(5-phospho-D-ribosyl)imidazole (N5-CAIR route): step 1/2. Its function is as follows. Catalyzes the ATP-dependent conversion of 5-aminoimidazole ribonucleotide (AIR) and HCO(3)(-) to N5-carboxyaminoimidazole ribonucleotide (N5-CAIR). This Staphylococcus aureus (strain MSSA476) protein is N5-carboxyaminoimidazole ribonucleotide synthase.